Consider the following 163-residue polypeptide: Probable ribosome biogenesis protein RLP24 (163 aa).

The protein belongs to the eukaryotic ribosomal protein eL24 family. Associated with nucleolar and cytoplasmic pre-60S particles. At the end of biogenesis it dissociates from cytoplasmic pre-60S particles and is likely to be exchanged for its ribosomal homolog, RPL24.

The protein resides in the nucleus. Its subcellular location is the nucleolus. Involved in the biogenesis of the 60S ribosomal subunit. Ensures the docking of GTPBP4/NOG1 to pre-60S particles. The chain is Probable ribosome biogenesis protein RLP24 (RSL24D1) from Pongo abelii (Sumatran orangutan).